A 372-amino-acid chain; its full sequence is Chaperone protein DnaJ (372 aa).

The J domain maps to 3-68 (NLYEILEVNE…EKRKKYDMYG (66 aa)). The CR-type zinc finger occupies 130-212 (GTKKEISYKK…CKGKGYEIER (83 aa)). Zn(2+)-binding residues include Cys143, Cys146, Cys160, Cys163, Cys186, Cys189, Cys200, and Cys203. CXXCXGXG motif repeat units lie at residues 143-150 (CHVCNGDG), 160-167 (CEKCHGTG), 186-193 (CDKCHGEG), and 200-207 (CENCKGKG).

The protein belongs to the DnaJ family. In terms of assembly, homodimer. Zn(2+) serves as cofactor.

Its subcellular location is the cytoplasm. Its function is as follows. Participates actively in the response to hyperosmotic and heat shock by preventing the aggregation of stress-denatured proteins and by disaggregating proteins, also in an autonomous, DnaK-independent fashion. Unfolded proteins bind initially to DnaJ; upon interaction with the DnaJ-bound protein, DnaK hydrolyzes its bound ATP, resulting in the formation of a stable complex. GrpE releases ADP from DnaK; ATP binding to DnaK triggers the release of the substrate protein, thus completing the reaction cycle. Several rounds of ATP-dependent interactions between DnaJ, DnaK and GrpE are required for fully efficient folding. Also involved, together with DnaK and GrpE, in the DNA replication of plasmids through activation of initiation proteins. The protein is Chaperone protein DnaJ of Finegoldia magna (strain ATCC 29328 / DSM 20472 / WAL 2508) (Peptostreptococcus magnus).